Reading from the N-terminus, the 601-residue chain is Elongation factor 4 (601 aa).

The region spanning S7 to Q189 is the tr-type G domain. GTP is bound by residues D19 to T24 and N136 to D139.

This sequence belongs to the TRAFAC class translation factor GTPase superfamily. Classic translation factor GTPase family. LepA subfamily.

The protein localises to the cell inner membrane. It catalyses the reaction GTP + H2O = GDP + phosphate + H(+). Functionally, required for accurate and efficient protein synthesis under certain stress conditions. May act as a fidelity factor of the translation reaction, by catalyzing a one-codon backward translocation of tRNAs on improperly translocated ribosomes. Back-translocation proceeds from a post-translocation (POST) complex to a pre-translocation (PRE) complex, thus giving elongation factor G a second chance to translocate the tRNAs correctly. Binds to ribosomes in a GTP-dependent manner. This chain is Elongation factor 4, found in Rhodopseudomonas palustris (strain BisB18).